The following is a 149-amino-acid chain: Arginine repressor (149 aa).

Belongs to the ArgR family.

Its subcellular location is the cytoplasm. It participates in amino-acid biosynthesis; L-arginine biosynthesis [regulation]. Regulates arginine biosynthesis genes. The chain is Arginine repressor from Chlorobaculum tepidum (strain ATCC 49652 / DSM 12025 / NBRC 103806 / TLS) (Chlorobium tepidum).